We begin with the raw amino-acid sequence, 393 residues long: Glutamyl-tRNA reductase (393 aa).

Residues 47-50 (TCGR), Ser-98, 103-105 (ETD), and Gln-109 each bind substrate. Residue Cys-48 is the Nucleophile of the active site. 177–182 (GAGAVG) is a binding site for NADP(+).

This sequence belongs to the glutamyl-tRNA reductase family. Homodimer.

It carries out the reaction (S)-4-amino-5-oxopentanoate + tRNA(Glu) + NADP(+) = L-glutamyl-tRNA(Glu) + NADPH + H(+). Its pathway is porphyrin-containing compound metabolism; protoporphyrin-IX biosynthesis; 5-aminolevulinate from L-glutamyl-tRNA(Glu): step 1/2. Functionally, catalyzes the NADPH-dependent reduction of glutamyl-tRNA(Glu) to glutamate 1-semialdehyde (GSA). The chain is Glutamyl-tRNA reductase from Pyrobaculum islandicum (strain DSM 4184 / JCM 9189 / GEO3).